Consider the following 140-residue polypeptide: Phospholipase A2 (140 aa).

The N-terminal stretch at 1 to 21 (MNPAHLLVLAAVCISLSGASS) is a signal peptide. A propeptide spanning residues 22–27 (IAPQPL) is cleaved from the precursor. 7 disulfides stabilise this stretch: C38–C97, C52–C139, C54–C70, C69–C125, C76–C118, C86–C111, and C104–C116. N39 is a glycosylation site (N-linked (GlcNAc...) asparagine). Ca(2+)-binding residues include Y53, G55, and G57. Residue H73 is part of the active site. Residue D74 participates in Ca(2+) binding. N107 carries an N-linked (GlcNAc...) asparagine glycan. Residue D119 is part of the active site.

Belongs to the phospholipase A2 family. Group I subfamily. D49 sub-subfamily. Requires Ca(2+) as cofactor. As to expression, expressed by the venom gland.

It is found in the secreted. It carries out the reaction a 1,2-diacyl-sn-glycero-3-phosphocholine + H2O = a 1-acyl-sn-glycero-3-phosphocholine + a fatty acid + H(+). In terms of biological role, PLA2 catalyzes the calcium-dependent hydrolysis of the 2-acyl groups in 3-sn-phosphoglycerides. The protein is Phospholipase A2 of Micrurus altirostris (Uruguayan coral snake).